A 477-amino-acid chain; its full sequence is P3 protein (477 aa).

The segment at 1 to 21 (MVLMQDKGSSQQWPGLGGEGG) is disordered. 8 helical membrane passes run 225-245 (PMLLGLLGQFLVMPLYAFLMA), 253-273 (ALALGLIITCSSPGGGGSYLF), 281-301 (VTLAISMTFLSTVAATGFLPL), 320-340 (ISKILGTLLFIAIPIAVGVLI), 361-381 (VLLLGGLFLAYRMGVFILAGI), 383-403 (LPIVLVGITVPLVGLLVGYCL), 417-437 (VSIEVGVQNSLLALAMLQLSL), and 450-470 (FIVALSGTSEMLALVIGHFIY).

Belongs to the bile acid:sodium symporter (BASS) (TC 2.A.28) family.

Its subcellular location is the membrane. In terms of biological role, the ubiquitous expression and the conservation of the sequence in distant animal species suggest that the gene codes for a protein with housekeeping functions. In Homo sapiens (Human), this protein is P3 protein (SLC10A3).